The sequence spans 537 residues: Frizzled-4 (537 aa).

The N-terminal stretch at 1 to 36 is a signal peptide; that stretch reads MAWRGAGPSVPGAPGGVGLSLGLLLQLLLLLGPARG. At 37 to 212 the chain is on the extracellular side; that stretch reads FGDEEERRCD…KCGYDAGLYS (176 aa). One can recognise an FZ domain in the interval 40–161; it reads EEERRCDPIR…NDHNHMCMEG (122 aa). 8 cysteine pairs are disulfide-bonded: C45–C106, C53–C99, C90–C128, C117–C158, C121–C145, C181–C200, C204–C282, and C302–C377. N59 is a glycosylation site (N-linked (GlcNAc...) asparagine). N144 is a glycosylation site (N-linked (GlcNAc...) asparagine). A helical transmembrane segment spans residues 213–243; sequence RSAKEFTDIWMAVWASLCFISTAFTVLTFLI. At 244 to 249 the chain is on the cytoplasmic side; that stretch reads DSSRFS. Residues 250 to 275 form a helical membrane-spanning segment; the sequence is YPERPIIFLSMCYNIYSIAYIVRLTV. Residues 276-299 lie on the Extracellular side of the membrane; it reads GRERISCDFEEAAEPVLIQEGLKN. Residues 300-333 form a helical membrane-spanning segment; that stretch reads TGCAIIFLLMYFFGMASSIWWVILTLTWFLAAGL. The Cytoplasmic portion of the chain corresponds to 334-336; the sequence is KWG. A helical membrane pass occupies residues 337-365; sequence HEAIEMHSSYFHIAAWAIPAVKTIVILIM. Residues 366–383 lie on the Extracellular side of the membrane; the sequence is RLVDADELTGLCYVGNQN. A helical membrane pass occupies residues 384-418; it reads LDALTGFVVAPLFTYLVIGTLFIAAGLVALFKIRS. The Cytoplasmic segment spans residues 419-431; it reads NLQKDGTKTDKLE. The helical transmembrane segment at 432 to 460 threads the bilayer; the sequence is RLMVKIGVFSVLYTVPATCVIACYFYEIS. At 461-473 the chain is on the extracellular side; sequence NWALFRYSADDSN. Residues 474-495 form a helical membrane-spanning segment; sequence MAVEMLKIFMSLLVGITSGMWI. Over 496-537 the chain is Cytoplasmic; the sequence is WSAKTLHTWQKCSNRLVNSGKVKREKRGNGWVKPGKGSETVV. Residues 499–504 carry the Lys-Thr-X-X-X-Trp motif, mediates interaction with the PDZ domain of Dvl family members motif; it reads KTLHTW. The short motif at 535–537 is the PDZ-binding element; it reads TVV.

It belongs to the G-protein coupled receptor Fz/Smo family. As to quaternary structure, interacts with MAGI3 and NDP. Component of a complex, at least composed of TSPAN12, FZD4 and norrin (NDP). Interacts (via FZ domain) with TSKU; TSKU competes with WNT2B for binding to FZD4, inhibiting Wnt signaling and repressing peripheral eye development. Interacts with glypican GPC3. Ubiquitinated by ZNRF3, leading to its degradation by the proteasome. As to expression, almost ubiquitous. Largely expressed in adult heart, skeletal muscle, ovary, and fetal kidney. Moderate amounts in adult liver, kidney, pancreas, spleen, and fetal lung, and small amounts in placenta, adult lung, prostate, testis, colon, fetal brain and liver.

The protein resides in the cell membrane. Its function is as follows. Receptor for Wnt proteins. Most frizzled receptors are coupled to the beta-catenin (CTNNB1) canonical signaling pathway, which leads to the activation of disheveled proteins, inhibition of GSK-3 kinase, nuclear accumulation of beta-catenin (CTNNB1) and activation of Wnt target genes. Plays a critical role in retinal vascularization by acting as a receptor for Wnt proteins and norrin (NDP). In retina, it can be activated by Wnt protein-binding and also by Wnt-independent signaling via binding of norrin (NDP), promoting in both cases beta-catenin (CTNNB1) accumulation and stimulation of LEF/TCF-mediated transcriptional programs. A second signaling pathway involving PKC and calcium fluxes has been seen for some family members, but it is not yet clear if it represents a distinct pathway or if it can be integrated in the canonical pathway, as PKC seems to be required for Wnt-mediated inactivation of GSK-3 kinase. Both pathways seem to involve interactions with G-proteins. May be involved in transduction and intercellular transmission of polarity information during tissue morphogenesis and/or in differentiated tissues. The polypeptide is Frizzled-4 (FZD4) (Homo sapiens (Human)).